We begin with the raw amino-acid sequence, 295 residues long: 4-hydroxy-tetrahydrodipicolinate synthase (295 aa).

A pyruvate-binding site is contributed by Thr-46. The active-site Proton donor/acceptor is Tyr-134. Catalysis depends on Lys-162, which acts as the Schiff-base intermediate with substrate. A pyruvate-binding site is contributed by Ile-205.

It belongs to the DapA family. Homotetramer; dimer of dimers.

It localises to the cytoplasm. It carries out the reaction L-aspartate 4-semialdehyde + pyruvate = (2S,4S)-4-hydroxy-2,3,4,5-tetrahydrodipicolinate + H2O + H(+). The protein operates within amino-acid biosynthesis; L-lysine biosynthesis via DAP pathway; (S)-tetrahydrodipicolinate from L-aspartate: step 3/4. In terms of biological role, catalyzes the condensation of (S)-aspartate-beta-semialdehyde [(S)-ASA] and pyruvate to 4-hydroxy-tetrahydrodipicolinate (HTPA). In Anaeromyxobacter sp. (strain K), this protein is 4-hydroxy-tetrahydrodipicolinate synthase.